We begin with the raw amino-acid sequence, 365 residues long: GDSL lipase (365 aa).

Positions 1-27 (MAVASRKLGALVLVAVLCLSLPTGCLS) are cleaved as a signal peptide. S40 serves as the catalytic Nucleophile. N-linked (GlcNAc...) asparagine glycosylation is found at N189 and N310. Active-site charge relay system residues include D318 and H321.

This sequence belongs to the 'GDSL' lipolytic enzyme family. Restricted to the pericarp during achene maturation. Expressed in the leaves of mature plants and seedlings, as well as in buds and flowers. Present in disk florets.

It is found in the secreted. Its subcellular location is the extracellular space. The catalysed reaction is (Z,S)-pyrethrolone + (1R,3R)-chrysanthemoyl-CoA = pyrethrin I + CoA. It catalyses the reaction (Z,S)-pyrethrolone + (1R,3R)-pyrethroyl-CoA = pyrethrin II + CoA. It carries out the reaction (Z,S)-jasmololone + (1R,3R)-chrysanthemoyl-CoA = jasmolin I + CoA. The enzyme catalyses (Z,S)-cinerolone + (1R,3R)-chrysanthemoyl-CoA = cinerin I + CoA. The catalysed reaction is (Z,S)-jasmololone + (1R,3R)-pyrethroyl-CoA = jasmolin II + CoA. It catalyses the reaction (Z,S)-cinerolone + (1R,3R)-pyrethroyl-CoA = cinerin II + CoA. It participates in isoprenoid biosynthesis. Functionally, component of the monoterpenoid pyrethrins biosynthesis; pyrethrins are widely used plant-derived pesticide. Acyltransferase that catalyzes the esterification of terpene acids and lipid alcohol substrates into pyrethrins; mediates the transfer of a chrysanthemoyl moiety from the coenzyme A (CoA) thio-ester chrysanthemoyl CoA to pyrethrolone, and, to a lower extent, to jasmololone and cinerolone thus producing pyrethrins (e.g. pyrethrin type I). Can also use pyrethroyl CoA as substrate. Also has esterase activity, being able to cleave the ester bond of pyrethrin I, p-nitrophenyl butanoate and p-nitrophenyl octanoate to produce pyrethrolone and p-nitrophenol, respectively. This chain is GDSL lipase, found in Tanacetum cinerariifolium (Dalmatian daisy).